A 27-amino-acid polypeptide reads, in one-letter code: Cruzioseptin-14 (27 aa).

Expressed by the skin glands.

It localises to the secreted. Its function is as follows. Has antimicrobial activity. This is Cruzioseptin-14 from Cruziohyla calcarifer (Splendid leaf frog).